The sequence spans 274 residues: Large ribosomal subunit protein uL2 (274 aa).

The segment at 221-256 (RGTAMNPVDHPHGGGEGRNFGKHPVTPWGVPTKGYK) is disordered.

The protein belongs to the universal ribosomal protein uL2 family. In terms of assembly, part of the 50S ribosomal subunit. Forms a bridge to the 30S subunit in the 70S ribosome.

Its function is as follows. One of the primary rRNA binding proteins. Required for association of the 30S and 50S subunits to form the 70S ribosome, for tRNA binding and peptide bond formation. It has been suggested to have peptidyltransferase activity; this is somewhat controversial. Makes several contacts with the 16S rRNA in the 70S ribosome. The chain is Large ribosomal subunit protein uL2 from Thioalkalivibrio sulfidiphilus (strain HL-EbGR7).